Reading from the N-terminus, the 131-residue chain is Profilin (131 aa).

Belongs to the profilin family. In terms of assembly, occurs in many kinds of cells as a complex with monomeric actin in a 1:1 ratio.

It is found in the cytoplasm. It localises to the cytoskeleton. Binds to actin and affects the structure of the cytoskeleton. At high concentrations, profilin prevents the polymerization of actin, whereas it enhances it at low concentrations. By binding to PIP2, it inhibits the formation of IP3 and DG. This Arachis hypogaea (Peanut) protein is Profilin.